The following is a 594-amino-acid chain: Zinc finger protein 703 (594 aa).

The span at 1-14 (MSDSPAGSNPRTPE) shows a compositional bias: polar residues. Disordered regions lie at residues 1-37 (MSDS…VPAV), 100-298 (TCSQ…GHVA), and 345-370 (LVGG…LTGA). Position 2 is an N-acetylserine (Ser-2). Positions 17–30 (GSGGGSSSGGGGGK) are enriched in gly residues. Composition is skewed to low complexity over residues 134–145 (RSAPGAASAAAA), 177–191 (GSSS…SSSS), and 212–225 (GASV…SSPG). Residues 246-256 (ELDKKEQEAKP) show a composition bias toward basic and acidic residues. Phosphoserine is present on Ser-257. Gly residues predominate over residues 345 to 356 (LVGGQLSGGLGL). The C2H2-type zinc finger occupies 460 to 488 (HSCNWVAASGPCDKRFATSEELLSHLRTH). Residue Arg-584 is modified to Omega-N-methylarginine.

The protein belongs to the Elbow/Noc family. As to quaternary structure, interacts with DCAF7 and PHB2. Interacts with TLE4; increases transcriptional repression. In terms of tissue distribution, expressed in mammary epithelium.

It localises to the nucleus. The protein localises to the cytoplasm. Transcriptional corepressor which does not bind directly to DNA and may regulate transcription through recruitment of histone deacetylases to gene promoters. Regulates cell adhesion, migration and proliferation. May be required for segmental gene expression during hindbrain development. The sequence is that of Zinc finger protein 703 (Znf703) from Mus musculus (Mouse).